We begin with the raw amino-acid sequence, 241 residues long: Small ribosomal subunit protein uS2c (241 aa).

It belongs to the universal ribosomal protein uS2 family.

It localises to the plastid. It is found in the chloroplast. The polypeptide is Small ribosomal subunit protein uS2c (rps2) (Porphyra purpurea (Red seaweed)).